Here is a 494-residue protein sequence, read N- to C-terminus: Glutamyl-tRNA(Gln) amidotransferase subunit A (494 aa).

Residues Lys-78 and Ser-158 each act as charge relay system in the active site. Residue Ser-182 is the Acyl-ester intermediate of the active site.

The protein belongs to the amidase family. GatA subfamily. As to quaternary structure, heterotrimer of A, B and C subunits.

It catalyses the reaction L-glutamyl-tRNA(Gln) + L-glutamine + ATP + H2O = L-glutaminyl-tRNA(Gln) + L-glutamate + ADP + phosphate + H(+). In terms of biological role, allows the formation of correctly charged Gln-tRNA(Gln) through the transamidation of misacylated Glu-tRNA(Gln) in organisms which lack glutaminyl-tRNA synthetase. The reaction takes place in the presence of glutamine and ATP through an activated gamma-phospho-Glu-tRNA(Gln). This chain is Glutamyl-tRNA(Gln) amidotransferase subunit A, found in Xanthobacter autotrophicus (strain ATCC BAA-1158 / Py2).